The chain runs to 133 residues: UPF0102 protein ABSDF1354 (133 aa).

Belongs to the UPF0102 family.

The polypeptide is UPF0102 protein ABSDF1354 (Acinetobacter baumannii (strain SDF)).